The sequence spans 269 residues: Undecaprenyl-diphosphatase (269 aa).

8 helical membrane-spanning segments follow: residues Leu3–Ser23, Phe41–Tyr61, Gly78–Leu98, Leu107–Ile127, Ser148–Ala167, Ala184–Leu204, Leu213–Val233, and Phe248–Val268.

Belongs to the UppP family.

Its subcellular location is the cell membrane. The catalysed reaction is di-trans,octa-cis-undecaprenyl diphosphate + H2O = di-trans,octa-cis-undecaprenyl phosphate + phosphate + H(+). Catalyzes the dephosphorylation of undecaprenyl diphosphate (UPP). Confers resistance to bacitracin. This chain is Undecaprenyl-diphosphatase, found in Thermoanaerobacter sp. (strain X514).